The chain runs to 289 residues: uncharacterized protein (289 aa).

Residue glutamate 48 is part of the active site.

The protein belongs to the PhzF family.

This is an uncharacterized protein from Pasteurella multocida (strain Pm70).